The following is a 241-amino-acid chain: MORN repeat-containing protein 3 (241 aa).

Residues 6 to 35 are interaction with MDM2; sequence CPQKSEPLWKEWDQKAQKNGLRHQVFAVNG. MORN repeat units lie at residues 38-60, 62-84, 91-113, 114-136, 137-159, 160-182, and 184-205; these read YVGEWKDNVKHGKGTQVWKKNGA, YEGDWKSGKRDGYGTLSLPDQET, YSGWWKGDKKCGYGIQFFGPKEY, YEGDWCGNQRSGWGRMYYSNGDI, YEGQWRNDKPEGEGMLRLKNGNR, YEGNWQRGVKNGSGRFFHLDHGQ, and FEGFWVDDVAKCGTMIDFGRDE. An interaction with SIRT1 region spans residues 76 to 100; it reads TLSLPDQETGKYKRAYSGWWKGDKK. Positions 206 to 240 are interaction with TP53; sequence APQPTQFPIPEVKILDPDGVLEEALAMFKKTKEEG.

In terms of assembly, interacts with MEIG1. Interacts with TP53, MDM2 and SIRT1; the interactions mediate post-transcriptional modifications of TP53 by MDM2 and SIRT1.

It localises to the cytoplasmic vesicle. It is found in the secretory vesicle. The protein localises to the acrosome. Its function is as follows. Assembles a suppression complex (suppresome) by tethering SIRT1 and MDM2 to regulate composite modifications of p53/TP53. Confers both deacetylation-mediated functional inactivation, by SIRT1, and ubiquitination-dependent degradation, by MDM2, of p53/TP53, promoting a proliferative and cell survival behaviors. May play a role in the regulation of spermatogenesis. The polypeptide is MORN repeat-containing protein 3 (MORN3) (Bos taurus (Bovine)).